The primary structure comprises 196 residues: Putative 3-methyladenine DNA glycosylase (196 aa).

Belongs to the DNA glycosylase MPG family.

This Chlamydia pneumoniae (Chlamydophila pneumoniae) protein is Putative 3-methyladenine DNA glycosylase.